Consider the following 453-residue polypeptide: Bifunctional protein GlmU (453 aa).

The pyrophosphorylase stretch occupies residues 1 to 226 (MVAVAILAAG…YLEITGINDR (226 aa)). UDP-N-acetyl-alpha-D-glucosamine contacts are provided by residues 7-10 (LAAG), Lys21, Gln73, and 78-79 (GT). A Mg(2+)-binding site is contributed by Asp103. Residues Gly140, Glu155, Asn170, and Asn224 each coordinate UDP-N-acetyl-alpha-D-glucosamine. Asn224 is a binding site for Mg(2+). The segment at 227 to 247 (KQLAMANGILQNRVKDHWMAQ) is linker. The tract at residues 248 to 453 (GVTLIDPDSI…EWKKTIESKK (206 aa)) is N-acetyltransferase. Residues Arg329 and Lys347 each coordinate UDP-N-acetyl-alpha-D-glucosamine. The active-site Proton acceptor is His359. UDP-N-acetyl-alpha-D-glucosamine is bound by residues Tyr362 and Asn373. Residues Ala376, 382–383 (NY), Ala419, and Arg436 contribute to the acetyl-CoA site.

This sequence in the N-terminal section; belongs to the N-acetylglucosamine-1-phosphate uridyltransferase family. The protein in the C-terminal section; belongs to the transferase hexapeptide repeat family. As to quaternary structure, homotrimer. Requires Mg(2+) as cofactor.

It localises to the cytoplasm. The catalysed reaction is alpha-D-glucosamine 1-phosphate + acetyl-CoA = N-acetyl-alpha-D-glucosamine 1-phosphate + CoA + H(+). It carries out the reaction N-acetyl-alpha-D-glucosamine 1-phosphate + UTP + H(+) = UDP-N-acetyl-alpha-D-glucosamine + diphosphate. It functions in the pathway nucleotide-sugar biosynthesis; UDP-N-acetyl-alpha-D-glucosamine biosynthesis; N-acetyl-alpha-D-glucosamine 1-phosphate from alpha-D-glucosamine 6-phosphate (route II): step 2/2. Its pathway is nucleotide-sugar biosynthesis; UDP-N-acetyl-alpha-D-glucosamine biosynthesis; UDP-N-acetyl-alpha-D-glucosamine from N-acetyl-alpha-D-glucosamine 1-phosphate: step 1/1. The protein operates within bacterial outer membrane biogenesis; LPS lipid A biosynthesis. Its function is as follows. Catalyzes the last two sequential reactions in the de novo biosynthetic pathway for UDP-N-acetylglucosamine (UDP-GlcNAc). The C-terminal domain catalyzes the transfer of acetyl group from acetyl coenzyme A to glucosamine-1-phosphate (GlcN-1-P) to produce N-acetylglucosamine-1-phosphate (GlcNAc-1-P), which is converted into UDP-GlcNAc by the transfer of uridine 5-monophosphate (from uridine 5-triphosphate), a reaction catalyzed by the N-terminal domain. The chain is Bifunctional protein GlmU from Rippkaea orientalis (strain PCC 8801 / RF-1) (Cyanothece sp. (strain PCC 8801)).